We begin with the raw amino-acid sequence, 181 residues long: Protein GrpE (181 aa).

The segment covering 1–13 (MENTQENPATQSA) has biased composition (polar residues). Residues 1-34 (MENTQENPATQSAEDIGSAKQAAQGAAPAAEAAD) form a disordered region. Residues 19–34 (AKQAAQGAAPAAEAAD) show a composition bias toward low complexity.

Belongs to the GrpE family. Homodimer.

The protein localises to the cytoplasm. In terms of biological role, participates actively in the response to hyperosmotic and heat shock by preventing the aggregation of stress-denatured proteins, in association with DnaK and GrpE. It is the nucleotide exchange factor for DnaK and may function as a thermosensor. Unfolded proteins bind initially to DnaJ; upon interaction with the DnaJ-bound protein, DnaK hydrolyzes its bound ATP, resulting in the formation of a stable complex. GrpE releases ADP from DnaK; ATP binding to DnaK triggers the release of the substrate protein, thus completing the reaction cycle. Several rounds of ATP-dependent interactions between DnaJ, DnaK and GrpE are required for fully efficient folding. In Burkholderia vietnamiensis (strain G4 / LMG 22486) (Burkholderia cepacia (strain R1808)), this protein is Protein GrpE.